The sequence spans 251 residues: Haloacid dehalogenase-like hydrolase domain-containing protein 3 (251 aa).

Lysine 15 carries the N6-acetyllysine; alternate modification. An N6-succinyllysine; alternate modification is found at lysine 15. The residue at position 130 (lysine 130) is an N6-acetyllysine.

This sequence belongs to the HAD-like hydrolase superfamily.

The sequence is that of Haloacid dehalogenase-like hydrolase domain-containing protein 3 (HDHD3) from Bos taurus (Bovine).